A 105-amino-acid polypeptide reads, in one-letter code: MQKKPMAPQQPTRVRTPREENNEILGIIEQMLGASRVRVRCMDGHTRMGRIPGKLKRKIWVREGDIVIVVPWEVQSDQKCDIIWRYTKGQVSWLSKKGYLKQAYD.

The 76-residue stretch at 12–87 folds into the S1-like domain; sequence TRVRTPREEN…QKCDIIWRYT (76 aa).

It belongs to the eIF-1A family.

Its function is as follows. Seems to be required for maximal rate of protein biosynthesis. Enhances ribosome dissociation into subunits and stabilizes the binding of the initiator Met-tRNA(I) to 40 S ribosomal subunits. This Methanococcus aeolicus (strain ATCC BAA-1280 / DSM 17508 / OCM 812 / Nankai-3) protein is Translation initiation factor 1A (eIF1A).